The chain runs to 397 residues: Putative gustatory receptor 85a (397 aa).

The Cytoplasmic portion of the chain corresponds to 1–56; the sequence is MYSLIEAQLLGGKLVNRVMASLRRIIQRSLGYFCALNGILDFNTDIGTGNLRRYRV. Residues 57–77 form a helical membrane-spanning segment; it reads LFMYRLLHNFAVISLTLKFLF. Residues 78 to 90 are Extracellular-facing; sequence DFTDHFKYIESST. Residues 91 to 111 form a helical membrane-spanning segment; the sequence is LITVNFFTYFTLVFFALLSSM. At 112–151 the chain is on the cytoplasmic side; sequence GSCYQWQNRILAVLKELKHQRDLSRHMGYRVPRSKQNSID. The helical transmembrane segment at 152–172 threads the bilayer; it reads YLLFALTVLLILRLSIHLATF. Residues 173 to 186 are Extracellular-facing; the sequence is TLSARMGFNHPCNC. The chain crosses the membrane as a helical span at residues 187 to 207; the sequence is FLPECMIFSMNYLLFAILAEI. Topologically, residues 208–268 are cytoplasmic; sequence TRCWWSLQSG…RYVTLAYMAR (61 aa). The helical transmembrane segment at 269 to 289 threads the bilayer; the sequence is NLWSGIVAGYLLVRFVIGNGL. Topologically, residues 290-293 are extracellular; the sequence is QDVE. The helical transmembrane segment at 294-314 threads the bilayer; that stretch reads LVYLVFSFITCIQPLMLSLLV. The Cytoplasmic segment spans residues 315–375; the sequence is NSMTSTTGSL…FRINRSLAFR (61 aa). A helical transmembrane segment spans residues 376–396; it reads SASLILVHVLYMVQSDYISIT. Position 397 (Asn-397) is a topological domain, extracellular.

The protein belongs to the insect chemoreceptor superfamily. Gustatory receptor (GR) family. Gr22e subfamily.

The protein resides in the cell membrane. Probable gustatory receptor which mediates acceptance or avoidance behavior, depending on its substrates. This chain is Putative gustatory receptor 85a (Gr85a), found in Drosophila melanogaster (Fruit fly).